A 366-amino-acid chain; its full sequence is Probable glucuronokinase 2 (366 aa).

126 to 136 (PRQTGLSGSSA) provides a ligand contact to ATP. The Proton acceptor role is filled by Asp-179.

This sequence belongs to the GHMP kinase family. The cofactor is Mg(2+). Mn(2+) is required as a cofactor. Requires Co(2+) as cofactor.

It catalyses the reaction D-glucuronate + ATP = 1-phospho-alpha-D-glucuronate + ADP + H(+). Functionally, sugar-1-kinase with a strict substrate specificity for D-glucuronic acid and ATP. Involved in the biosynthesis of UDP-glucuronic acid (UDP-GlcA), providing nucleotide sugars for cell-wall polymers. May be also involved in a salvage pathway for glucuronic acid. In Arabidopsis thaliana (Mouse-ear cress), this protein is Probable glucuronokinase 2 (GLCAK2).